We begin with the raw amino-acid sequence, 171 residues long: Putative RING finger protein 027R (171 aa).

An RING-type zinc finger spans residues 121–163; the sequence is CAVCMTNPVWVDFVWSCKHISTCIKCLKMLSRGSNGFKCPICR.

This sequence belongs to the IIV-6 157L family.

This chain is Putative RING finger protein 027R, found in Aedes vexans (Inland floodwater mosquito).